A 689-amino-acid chain; its full sequence is Glycine--tRNA ligase beta subunit (689 aa).

It belongs to the class-II aminoacyl-tRNA synthetase family. As to quaternary structure, tetramer of two alpha and two beta subunits.

It localises to the cytoplasm. The catalysed reaction is tRNA(Gly) + glycine + ATP = glycyl-tRNA(Gly) + AMP + diphosphate. The polypeptide is Glycine--tRNA ligase beta subunit (Shewanella pealeana (strain ATCC 700345 / ANG-SQ1)).